A 240-amino-acid polypeptide reads, in one-letter code: Uridylate kinase (240 aa).

13–16 lines the ATP pocket; the sequence is KFSG. Residue G55 coordinates UMP. Residues G56 and R60 each coordinate ATP. Residues D76 and 137-144 contribute to the UMP site; that span reads TGNPFFTT. ATP contacts are provided by T164, Y170, and D173.

This sequence belongs to the UMP kinase family. In terms of assembly, homohexamer.

Its subcellular location is the cytoplasm. The catalysed reaction is UMP + ATP = UDP + ADP. It participates in pyrimidine metabolism; CTP biosynthesis via de novo pathway; UDP from UMP (UMPK route): step 1/1. With respect to regulation, inhibited by UTP. Its function is as follows. Catalyzes the reversible phosphorylation of UMP to UDP. The sequence is that of Uridylate kinase from Helicobacter pylori (strain HPAG1).